Here is a 507-residue protein sequence, read N- to C-terminus: Histidine ammonia-lyase (507 aa).

Residues 145–147 (ASG) constitute a cross-link (5-imidazolinone (Ala-Gly)). A 2,3-didehydroalanine (Ser) modification is found at S146.

Belongs to the PAL/histidase family. Contains an active site 4-methylidene-imidazol-5-one (MIO), which is formed autocatalytically by cyclization and dehydration of residues Ala-Ser-Gly.

Its subcellular location is the cytoplasm. The enzyme catalyses L-histidine = trans-urocanate + NH4(+). It participates in amino-acid degradation; L-histidine degradation into L-glutamate; N-formimidoyl-L-glutamate from L-histidine: step 1/3. The polypeptide is Histidine ammonia-lyase (Treponema denticola (strain ATCC 35405 / DSM 14222 / CIP 103919 / JCM 8153 / KCTC 15104)).